The primary structure comprises 179 residues: MAKLHDYYKSDVVNELAKQFGYKTIMQVPRIEKITLNMGVGEAISDKKLLENAAADMAAISGQKPLITKARKSVAGFKIREGYPIGCKVTLRGERMWEFLERLICISVPRIRDFRGLNAKAFDGRGNYSMGVREQIIFPEIDYDKVDRVRGLDITITTSANTDEEGRALLAAFNFPFRK.

This sequence belongs to the universal ribosomal protein uL5 family. In terms of assembly, part of the 50S ribosomal subunit; part of the 5S rRNA/L5/L18/L25 subcomplex. Contacts the 5S rRNA and the P site tRNA. Forms a bridge to the 30S subunit in the 70S ribosome.

Functionally, this is one of the proteins that bind and probably mediate the attachment of the 5S RNA into the large ribosomal subunit, where it forms part of the central protuberance. In the 70S ribosome it contacts protein S13 of the 30S subunit (bridge B1b), connecting the 2 subunits; this bridge is implicated in subunit movement. Contacts the P site tRNA; the 5S rRNA and some of its associated proteins might help stabilize positioning of ribosome-bound tRNAs. The polypeptide is Large ribosomal subunit protein uL5 (Aeromonas salmonicida (strain A449)).